Here is a 122-residue protein sequence, read N- to C-terminus: Holo-[acyl-carrier-protein] synthase (122 aa).

Mg(2+) is bound by residues Asp9 and Glu58.

This sequence belongs to the P-Pant transferase superfamily. AcpS family. Mg(2+) serves as cofactor.

The protein resides in the cytoplasm. The enzyme catalyses apo-[ACP] + CoA = holo-[ACP] + adenosine 3',5'-bisphosphate + H(+). Transfers the 4'-phosphopantetheine moiety from coenzyme A to a Ser of acyl-carrier-protein. In Chlamydia caviae (strain ATCC VR-813 / DSM 19441 / 03DC25 / GPIC) (Chlamydophila caviae), this protein is Holo-[acyl-carrier-protein] synthase.